Reading from the N-terminus, the 188-residue chain is NADH-quinone oxidoreductase subunit I (188 aa).

4Fe-4S ferredoxin-type domains follow at residues 44-74 (LNRY…VEGA) and 90-119 (RVYQ…MTNE). Positions 54, 57, 60, 64, 99, 102, 105, and 109 each coordinate [4Fe-4S] cluster. Residues 144–188 (GMVDSPHPMAPGTTAEDYYRGTVTGGAAPASQDEPEADDTAGDRP) form a disordered region. The segment covering 176–188 (DEPEADDTAGDRP) has biased composition (acidic residues).

It belongs to the complex I 23 kDa subunit family. As to quaternary structure, NDH-1 is composed of 14 different subunits. Subunits NuoA, H, J, K, L, M, N constitute the membrane sector of the complex. It depends on [4Fe-4S] cluster as a cofactor.

The protein resides in the cell membrane. The catalysed reaction is a quinone + NADH + 5 H(+)(in) = a quinol + NAD(+) + 4 H(+)(out). Its function is as follows. NDH-1 shuttles electrons from NADH, via FMN and iron-sulfur (Fe-S) centers, to quinones in the respiratory chain. The immediate electron acceptor for the enzyme in this species is believed to be ubiquinone. Couples the redox reaction to proton translocation (for every two electrons transferred, four hydrogen ions are translocated across the cytoplasmic membrane), and thus conserves the redox energy in a proton gradient. The polypeptide is NADH-quinone oxidoreductase subunit I (Rhodococcus opacus (strain B4)).